The chain runs to 373 residues: Galactoside alpha-(1,2)-fucosyltransferase 1 (373 aa).

At 1–12 (MWPPSRRQLCLA) the chain is on the cytoplasmic side. Residues 13–29 (FLLVCALSAFSFLLHLH) traverse the membrane as a helical; Signal-anchor for type II membrane protein segment. Residues 30 to 373 (QDLFRNGLAL…GSWRPWRFLG (344 aa)) are Lumenal-facing. N-linked (GlcNAc...) asparagine glycans are attached at residues asparagine 66, asparagine 301, and asparagine 327.

It belongs to the glycosyltransferase 11 family. As to expression, brain.

The protein resides in the golgi apparatus. The protein localises to the golgi stack membrane. It carries out the reaction a beta-D-galactosyl-(1-&gt;4)-N-acetyl-beta-D-glucosaminyl derivative + GDP-beta-L-fucose = an alpha-L-Fuc-(1-&gt;2)-beta-D-Gal-(1-&gt;4)-beta-D-GlcNAc derivative + GDP + H(+). It catalyses the reaction a ganglioside GA1 + GDP-beta-L-fucose = a ganglioside Fuc-GA1 + GDP + H(+). The catalysed reaction is a beta-D-Gal-(1-&gt;3)-beta-D-GlcNAc-(1-&gt;3)-beta-D-Gal-(1-&gt;4)-beta-D-Glc-(1&lt;-&gt;1')-Cer(d18:1(4E)) + GDP-beta-L-fucose = alpha-L-fucosyl-(1-&gt;2)- beta-D-galactosyl-(1-&gt;3)-N-acetyl-beta-D-glucosaminyl-(1-&gt;3)-beta-D-galactosyl-(1-&gt;4)-beta-D-glucosyl-(1&lt;-&gt;1')-N-acylsphing-4-enine + GDP + H(+). The enzyme catalyses a neolactoside nLc4Cer(d18:1(4E)) + GDP-beta-L-fucose = a neolactoside IV(2)-alpha-Fuc-nLc4Cer(d18:1(4E)) + GDP + H(+). It carries out the reaction a ganglioside GM1 + GDP-beta-L-fucose = a ganglioside Fuc-GM1 + GDP + H(+). It catalyses the reaction beta-D-galactosyl-(1-&gt;3)-N-acetyl-D-galactosamine + GDP-beta-L-fucose = alpha-L-fucosyl-(1-&gt;2)-beta-D-galactosyl-(1-&gt;3)-N-acetyl-D-galactosamine + GDP + H(+). Its pathway is protein modification; protein glycosylation. In terms of biological role, catalyzes the transfer of L-fucose, from a guanosine diphosphate-beta-L-fucose, to the terminal galactose residue of glycoconjugates through an alpha(1,2) linkage leading to H antigen synthesis that is an intermediate substrate in the synthesis of ABO blood group antigens. H antigen is essential for maturation of the glomerular layer of the main olfactory bulb, in cell migration and early cell-cell contacts during tumor associated angiogenesis. Preferentially fucosylates soluble lactose and to a lesser extent fucosylates glycolipids gangliosides GA1 and GM1a. In Oryctolagus cuniculus (Rabbit), this protein is Galactoside alpha-(1,2)-fucosyltransferase 1.